A 154-amino-acid polypeptide reads, in one-letter code: Ribosome maturation factor RimP (154 aa).

It belongs to the RimP family.

It localises to the cytoplasm. Functionally, required for maturation of 30S ribosomal subunits. In Clostridium perfringens (strain SM101 / Type A), this protein is Ribosome maturation factor RimP.